A 550-amino-acid polypeptide reads, in one-letter code: Chaperonin GroEL (550 aa).

Residues 30–33 (TLGP), lysine 51, 87–91 (DGTTT), glycine 415, and aspartate 496 each bind ATP.

It belongs to the chaperonin (HSP60) family. Forms a cylinder of 14 subunits composed of two heptameric rings stacked back-to-back. Interacts with the co-chaperonin GroES.

It localises to the cytoplasm. The enzyme catalyses ATP + H2O + a folded polypeptide = ADP + phosphate + an unfolded polypeptide.. In terms of biological role, together with its co-chaperonin GroES, plays an essential role in assisting protein folding. The GroEL-GroES system forms a nano-cage that allows encapsulation of the non-native substrate proteins and provides a physical environment optimized to promote and accelerate protein folding. The sequence is that of Chaperonin GroEL from Rickettsia typhi (strain ATCC VR-144 / Wilmington).